We begin with the raw amino-acid sequence, 173 residues long: Alpha-crystallin A chain (173 aa).

Methionine 1 carries the N-acetylmethionine modification. The segment at 1 to 63 (MDIAIQHPWF…RTVLDSGISE (63 aa)) is required for complex formation with BFSP1 and BFSP2. Glutamine 6 carries the deamidated glutamine; partial modification. Position 45 is a phosphoserine (serine 45). Glutamine 50 is subject to Deamidated glutamine; partial. The sHSP domain occupies 52–162 (LFRTVLDSGI…GHSERAIPVS (111 aa)). Lysine 70 and lysine 99 each carry N6-acetyllysine. Residue histidine 100 participates in Zn(2+) binding. Asparagine 101 is modified (deamidated asparagine; partial). 2 residues coordinate Zn(2+): glutamate 102 and histidine 107. A Phosphoserine modification is found at serine 122. Residue asparagine 123 is modified to Deamidated asparagine; partial. The segment at 144–173 (PKVPSGVDAGHSERAIPVSREEKPSSAPSS) is disordered. Over residues 153–167 (GHSERAIPVSREEKP) the composition is skewed to basic and acidic residues. Histidine 154 contributes to the Zn(2+) binding site. A glycan (O-linked (GlcNAc) serine) is linked at serine 162.

The protein belongs to the small heat shock protein (HSP20) family. As to quaternary structure, heteromer composed of three CRYAA and one CRYAB subunits. Inter-subunit bridging via zinc ions enhances stability, which is crucial as there is no protein turn over in the lens. Can also form homodimers and homotetramers (dimers of dimers) which serve as the building blocks of homooligomers. Within homooligomers, the zinc-binding motif is created from residues of 3 different molecules. His-100 and Glu-102 from one molecule are ligands of the zinc ion, and His-107 and His-154 residues from additional molecules complete the site with tetrahedral coordination geometry. Part of a complex required for lens intermediate filament formation composed of BFSP1, BFSP2 and CRYAA. In terms of processing, acetylation at Lys-70 may increase chaperone activity. Undergoes age-dependent proteolytical cleavage at the C-terminus.

It localises to the cytoplasm. The protein resides in the nucleus. Functionally, contributes to the transparency and refractive index of the lens. Acts as a chaperone, preventing aggregation of various proteins under a wide range of stress conditions. Required for the correct formation of lens intermediate filaments as part of a complex composed of BFSP1, BFSP2 and CRYAA. The protein is Alpha-crystallin A chain (CRYAA) of Canis lupus familiaris (Dog).